A 479-amino-acid polypeptide reads, in one-letter code: Tegument protein VP16 homolog (479 aa).

Belongs to the herpesviridae tegument protein VP16 protein family. As to quaternary structure, associates with the VP16-induced complex; binding to host HCFC1 activates VP16 for association with the octamer motif-binding host protein POU2F1, to form a multiprotein-DNA complex responsible for activating transcription of the viral immediate early genes.

It localises to the virion tegument. The protein localises to the host nucleus. Functionally, transcriptional activator of immediate-early (IE) gene products (alpha genes). Acts as a key activator of lytic infection by initiating the lytic program through the assembly of the transcriptional regulatory VP16-induced complex composed of VP16 and two cellular factors, HCFC1 and POU2F1. VP16-induced complex represents a regulatory switch: when it is on, it promotes IE-gene expression and thus lytic infection, and when it is off, it limits IE-gene transcription favoring latent infection. In terms of biological role, may play a role in the aggregation of tegument proteins around nucleocapsids during virus morphogenesis. The polypeptide is Tegument protein VP16 homolog (Equus caballus (Horse)).